The sequence spans 111 residues: UPF0060 membrane protein xcc-b100_1273 (111 aa).

The next 4 helical transmembrane spans lie at 8–28 (LLLF…PYLW), 34–54 (SVWL…LLTL), 62–82 (VYAA…WWVD), and 91–111 (LLGA…PRSG).

It belongs to the UPF0060 family.

The protein resides in the cell inner membrane. This is UPF0060 membrane protein xcc-b100_1273 from Xanthomonas campestris pv. campestris (strain B100).